The sequence spans 325 residues: Casein kinase I isoform alpha (325 aa).

A2 carries the N-acetylalanine modification. A Phosphoserine modification is found at S4. K8 carries the N6-acetyllysine modification. The Protein kinase domain maps to 17 to 285 (YKLVRKIGSG…YLRQLFRILF (269 aa)). Residues 23-31 (IGSGSFGDI) and K46 each bind ATP. Catalysis depends on D136, which acts as the Proton acceptor.

This sequence belongs to the protein kinase superfamily. CK1 Ser/Thr protein kinase family. Casein kinase I subfamily. Interacts with the Axin complex. Interacts with TUT1, leading to TUT1 phosphorylation. Interacts with FAM83A, FAM83B, FAM83C, FAM83D, FAM83E, FAM83F, FAM83G and FAM83H (via DUF1669). Interaction with FAM83H recruits CSNK1A1 to keratin filaments. Phosphorylated by MTOR in response to mitogenic stimulation, leading to its activation.

Its subcellular location is the cytoplasm. It is found in the cytoskeleton. It localises to the microtubule organizing center. The protein resides in the centrosome. The protein localises to the chromosome. Its subcellular location is the centromere. It is found in the kinetochore. It localises to the nucleus speckle. The protein resides in the cilium basal body. The protein localises to the spindle. It carries out the reaction L-seryl-[protein] + ATP = O-phospho-L-seryl-[protein] + ADP + H(+). The catalysed reaction is L-threonyl-[protein] + ATP = O-phospho-L-threonyl-[protein] + ADP + H(+). In terms of biological role, casein kinases are operationally defined by their preferential utilization of acidic proteins such as caseins as substrates. Can phosphorylate a large number of proteins. Participates in Wnt signaling. Phosphorylates CTNNB1 at 'Ser-45'. May phosphorylate PER1 and PER2. May play a role in segregating chromosomes during mitosis. May play a role in keratin cytoskeleton disassembly and thereby, it may regulate epithelial cell migration. Acts as a positive regulator of mTORC1 and mTORC2 signaling in response to nutrients by mediating phosphorylation of DEPTOR inhibitor. Acts as an inhibitor of NLRP3 inflammasome assembly by mediating phosphorylation of NLRP3. In Oryctolagus cuniculus (Rabbit), this protein is Casein kinase I isoform alpha (CSNK1A1).